A 1750-amino-acid polypeptide reads, in one-letter code: MIVNNMYNLCPKIINSVIVVGLYYGFMTALSIKPSHIFLIRALLLEKETNKNKGVAEETKKKVAATTGFIMGQFIRLISIYYGPLYVALGRPHTITILALPYLLIHLFWNTDKSFFAYDSNKLNSIRNLEIYCVFLNHFALQLLNSCILPNSTLARLVSIYMFRCNNKILFLTSSFFAWFIGQLFILNCFELVLVWIRKKNSIRSTFRNYLLRNSIFVIFLNCIFGSLLFLLSIQCLGRIPSPIPTQKLSEVSKIEQRERERLQKEEERGVEKKEQSTEEDPSLFLEEKAGWDKEKEPDYKFPDSELEILQKKKIKNQEFEKHLAALLFDYKRWTRPFRYIKNNHLEQALRNEMSQYFFDTYQSDGKNRLSFTHPISLSAFLKMIKPKIPLLLVEKNTFNSNSLDNGWVYRNKKQMNYLRIDFLNRVKNLDKAKAVALPRIEFETTRTQLCIHNDENKQEYLPENFDPLLNGPYRGRIKKGLLPINDTLSEHLRETVMLNRLHALVLLNTNSKNSNQKMSTFGKKPLEICGFSTFNLNLMDSELKTEVLVNPIETHDLNFLKKYSTIEEISKKVPRWSYKLITELEQISYYKNPPDDHDIRSRKGISVVIFDPNKEATTTNSKTNTTKDTNLETKKESESDEDKLVVIRYPQQSDFRQGLIKDSMRNQRRKIIIWELFNANVHSPLFFDRLTIVFSFPRLKQLFINLSARHVFGISKSTDKKRGKTKKEEKRENKQREQKERLEIGEAWDVFPVAQIIRGFLLLNQTFIRKKIILPSLIIGKNIGRILLFQIPEWSEDLRELNRETHIKCTYNGIPLSEKEFPENWLTEGIQIKILFPFCLKPWHPYKPQTSHYDFCFLTVWGRETEQPFGHPRKTPSFFEPVLQELDKKIVNINIKARIFSKVKINLFKRFSKEKDFQISNQIINESFQQIEEIPGCTNSSLIEKMQNMAHRTSTIKKEIERVTEEKKRVTLERYICFYKRSYRLALAKNIFKKVKVKVTKNRLICKFFFFKKLFNQRIYNNIFLETIYICRITTQLFLESTKKLIYKYIFNYERNKKRIDINKETKNKFNLISKLKTYNHCKKNSYLSCDLSNLSQAYVFYKIPQTGVLNVCKLISALQQNGIPSFIKTQIKDSFHTQGICKYELIQKKLQWPKTNQWKNWLRVNSEYDLSHILWFSLISQKQKWRNRVEQYHRSKEKYLNKRNSRGNYRLSDSKKQNVPKPVSDNYKKCYQYDLLSYKSINYAKKSASVISRSTPKGQAISYNDNMLQNIPGKIKRLYITYIPYIGKTLDRKYLIWKNIHFYLRKKVDIESWVAVNTSSDKDSTIGTYNYQLIDQIDKKEKELFSIPIRQNTEINRPNSTNSLVDWMGMNEQILNRPITNLELWFFPEFVWFFNVYKTKPWIIPSKILILNSNLSETDSKQKSETDSKQKSETDSKQKSETDSKQKSETDSKQKSETDSKQKSETDSKQKSETDSKQKSETDSKQKNNAEIQKDLDEDSTKSDKKNKKEKETELELFAKKYFLFQLRGDPTFKKSFFKNIQIYCLLLRLTNRKKMTLSCIQRRKFNLRIMPTMTNLFNVPEFLKMTGLVMDPLPLLIKTNGKFLLYQIVGISLVHKSKHQTNQTYRKRIIIRAGMTNLENNHLDVLVLENILSSRCRREFRTLICLNYKNWNGVNTNSIFCSKNCNQFWEERKPQYNEKRELIQKFLWPNYRLEDLACVNRYSFDITNGSRFSLLRFHMYLPWKIHG.

The next 6 membrane-spanning stretches (helical) occupy residues 12 to 32, 69 to 89, 97 to 117, 129 to 149, 177 to 197, and 216 to 236; these read KIINSVIVVGLYYGFMTALSI, FIMGQFIRLISIYYGPLYVAL, ILALPYLLIHLFWNTDKSFFA, LEIYCVFLNHFALQLLNSCIL, FAWFIGQLFILNCFELVLVWI, and IFVIFLNCIFGSLLFLLSIQC. A compositionally biased stretch (basic and acidic residues) spans 260-277; that stretch reads RERLQKEEERGVEKKEQS. 5 disordered regions span residues 260–282, 617–638, 718–738, 1205–1225, and 1419–1512; these read RERLQKEEERGVEKKEQSTEEDP, ATTTNSKTNTTKDTNLETKKES, STDKKRGKTKKEEKRENKQRE, RNSRGNYRLSDSKKQNVPKPV, and ETDS…NKKE. Low complexity predominate over residues 617-629; that stretch reads ATTTNSKTNTTKD. Over residues 727 to 738 the composition is skewed to basic and acidic residues; the sequence is KKEEKRENKQRE. Over residues 1420–1512 the composition is skewed to basic and acidic residues; that stretch reads TDSKQKSETD…TKSDKKNKKE (93 aa).

This sequence belongs to the TIC214 family. As to quaternary structure, part of the Tic complex.

Its subcellular location is the plastid. The protein resides in the chloroplast inner membrane. Functionally, involved in protein precursor import into chloroplasts. May be part of an intermediate translocation complex acting as a protein-conducting channel at the inner envelope. In Cuscuta reflexa (Southern Asian dodder), this protein is Protein TIC 214.